Consider the following 359-residue polypeptide: 3-dehydroquinate synthase (359 aa).

Residues D71–K76, G105–D109, T129–T130, K142, K151, and C169–T172 contribute to the NAD(+) site. Zn(2+) contacts are provided by E184, H247, and H264.

This sequence belongs to the sugar phosphate cyclases superfamily. Dehydroquinate synthase family. NAD(+) serves as cofactor. Requires Co(2+) as cofactor. Zn(2+) is required as a cofactor.

Its subcellular location is the cytoplasm. It carries out the reaction 7-phospho-2-dehydro-3-deoxy-D-arabino-heptonate = 3-dehydroquinate + phosphate. The protein operates within metabolic intermediate biosynthesis; chorismate biosynthesis; chorismate from D-erythrose 4-phosphate and phosphoenolpyruvate: step 2/7. Functionally, catalyzes the conversion of 3-deoxy-D-arabino-heptulosonate 7-phosphate (DAHP) to dehydroquinate (DHQ). This Shewanella oneidensis (strain ATCC 700550 / JCM 31522 / CIP 106686 / LMG 19005 / NCIMB 14063 / MR-1) protein is 3-dehydroquinate synthase.